The primary structure comprises 1531 residues: Lysophospholipase nte1 (1531 aa).

Topologically, residues M1–G72 are cytoplasmic. Residues W73 to V93 traverse the membrane as a helical segment. Over T94 to T115 the chain is Lumenal. A helical membrane pass occupies residues M116 to I136. Over R137 to I1531 the chain is Cytoplasmic. Disordered regions lie at residues G242–R265, A303–K385, and N766–R789. The span at R325 to S343 shows a compositional bias: basic and acidic residues. Residues G689 to S809 and R849 to R969 contribute to the a nucleoside 3',5'-cyclic phosphate site. Low complexity predominate over residues S768–A779. The region spanning L1228 to K1392 is the PNPLA domain. The GXGXXG signature appears at G1232 to G1237. The short motif at G1259 to G1263 is the GXSXG element. The active-site Nucleophile is the S1261. The active-site Proton acceptor is D1379. The DGA/G signature appears at D1379 to G1381. The interval L1510–I1531 is disordered.

Belongs to the NTE family.

Its subcellular location is the endoplasmic reticulum membrane. The enzyme catalyses a 1-acyl-sn-glycero-3-phosphocholine + H2O = sn-glycerol 3-phosphocholine + a fatty acid + H(+). With respect to regulation, inhibited by organophosphorus esters. Functionally, intracellular phospholipase B that catalyzes the double deacylation of phosphatidylcholine (PC) to glycerophosphocholine (GroPCho). Plays an important role in membrane lipid homeostasis. Responsible for the rapid PC turnover in response to inositol, elevated temperatures, or when choline is present in the growth medium. The protein is Lysophospholipase nte1 (nte1) of Aspergillus niger (strain ATCC MYA-4892 / CBS 513.88 / FGSC A1513).